The primary structure comprises 459 residues: Alcohol acyl transferase 2 (459 aa).

Catalysis depends on proton acceptor residues His164 and Asn385.

The protein belongs to the plant acyltransferase family. Highly expressed in the cortex and skin of ripe fruit.

Its function is as follows. Involved in the biosynthesis of volatile esters which confer ripe apple fruit flavor. Alcohol acyl transferase that can use a wide range of alcohols as substrate to produce esters. In Malus domestica (Apple), this protein is Alcohol acyl transferase 2.